Consider the following 441-residue polypeptide: Cytochrome c biogenesis protein Ccs1 (441 aa).

3 helical membrane-spanning segments follow: residues 19–39 (LKLA…GTVI), 78–98 (TWWF…CTLA), and 164–184 (IGPI…LLGN).

The protein belongs to the Ccs1/CcsB family. May interact with CcsA.

Its subcellular location is the plastid. It is found in the chloroplast thylakoid membrane. Functionally, required during biogenesis of c-type cytochromes (cytochrome c6 and cytochrome f) at the step of heme attachment. This Rhodomonas salina (Cryptomonas salina) protein is Cytochrome c biogenesis protein Ccs1.